Consider the following 235-residue polypeptide: Glucosamine-6-phosphate deaminase (235 aa).

D62 (proton acceptor; for enolization step) is an active-site residue. Catalysis depends on N128, which acts as the For ring-opening step. H130 (proton acceptor; for ring-opening step) is an active-site residue. E135 (for ring-opening step) is an active-site residue.

It belongs to the glucosamine/galactosamine-6-phosphate isomerase family. NagB subfamily.

The enzyme catalyses alpha-D-glucosamine 6-phosphate + H2O = beta-D-fructose 6-phosphate + NH4(+). It functions in the pathway amino-sugar metabolism; N-acetylneuraminate degradation; D-fructose 6-phosphate from N-acetylneuraminate: step 5/5. Its function is as follows. Catalyzes the reversible isomerization-deamination of glucosamine 6-phosphate (GlcN6P) to form fructose 6-phosphate (Fru6P) and ammonium ion. The polypeptide is Glucosamine-6-phosphate deaminase (Streptococcus pneumoniae serotype 2 (strain D39 / NCTC 7466)).